The primary structure comprises 338 residues: METTLQLYSNTPHPQAQYWSVCKVEALFETPFLELVHRAAIVHREHFNPQAVQLSTLMSIKTGGCPEDCGYCPQSARYRTGVQKQALLEVEDIVEKAKIAKSRGASRFCMGAAWRGPKPKDIGKITEIVKAVKDLGLETCGTFGLLEDGMAENLKEAGLDYYNHNIDTSPEHYKKVIGTRGFEDRLSTLGKVRKAGLKVCCGGIIGMNENRKERAGFIASLANLDPQPESVPINQLVKVDGTPLADAEELDWTEFVRTIAVARITMPKSYVRLSAGRQGMSEEMQAMCFMAGANSIFYGDKLLVTGNAEEDRDQLLMAKLDLEPETAENRRVSVQPER.

Residues 50 to 277 form the Radical SAM core domain; that stretch reads QAVQLSTLMS…KSYVRLSAGR (228 aa). [4Fe-4S] cluster is bound by residues Cys65, Cys69, and Cys72. The [2Fe-2S] cluster site is built by Cys109, Cys140, Cys200, and Arg272.

Belongs to the radical SAM superfamily. Biotin synthase family. Homodimer. Requires [4Fe-4S] cluster as cofactor. It depends on [2Fe-2S] cluster as a cofactor.

It carries out the reaction (4R,5S)-dethiobiotin + (sulfur carrier)-SH + 2 reduced [2Fe-2S]-[ferredoxin] + 2 S-adenosyl-L-methionine = (sulfur carrier)-H + biotin + 2 5'-deoxyadenosine + 2 L-methionine + 2 oxidized [2Fe-2S]-[ferredoxin]. It functions in the pathway cofactor biosynthesis; biotin biosynthesis; biotin from 7,8-diaminononanoate: step 2/2. Its function is as follows. Catalyzes the conversion of dethiobiotin (DTB) to biotin by the insertion of a sulfur atom into dethiobiotin via a radical-based mechanism. The chain is Biotin synthase from Actinobacillus succinogenes (strain ATCC 55618 / DSM 22257 / CCUG 43843 / 130Z).